Reading from the N-terminus, the 98-residue chain is Tax1-binding protein 3 (98 aa).

At Ser-2 the chain carries N-acetylserine. The 76-residue stretch at 12 to 87 (VVQRVEIHKL…VVRLLVTRQS (76 aa)) folds into the PDZ domain.

As to quaternary structure, interacts (via its PDZ domain) with GLS2. Interacts (via its PDZ domain) with RTKN (via the C-terminal region); this interaction facilitates Rho-mediated activation of the FOS serum response element (SRE). Interacts (via PDZ domain) with ARHGEF16. Interacts (via PDZ domain) with KCNJ4 (via C-terminus). Competes with LIN7A for KCNJ4 binding. Interacts (via its PDZ domain) with CTNNB1; this interaction inhibits the transcriptional activity of CTNNB1. Interacts with ADGRB2. As to expression, detected in kidney distal convoluted tubules (at protein level).

The protein resides in the cytoplasm. The protein localises to the nucleus. It is found in the cell membrane. Its function is as follows. May regulate a number of protein-protein interactions by competing for PDZ domain binding sites. Binds CTNNB1 and may thereby act as an inhibitor of the Wnt signaling pathway. Competes with LIN7A for KCNJ4 binding, and thereby promotes KCNJ4 internalization. May play a role in the Rho signaling pathway. In Rattus norvegicus (Rat), this protein is Tax1-binding protein 3.